Consider the following 403-residue polypeptide: Metacaspase-7 (403 aa).

Active-site residues include histidine 86 and cysteine 139. An S-nitrosocysteine modification is found at cysteine 139.

It belongs to the peptidase C14B family. In terms of processing, proteolytically processed; by an autocatalytic mechanism. In terms of tissue distribution, expressed in roots, flowers and siliques.

This is Metacaspase-7 (AMC7) from Arabidopsis thaliana (Mouse-ear cress).